The chain runs to 275 residues: Large ribosomal subunit protein uL2 (275 aa).

Disordered regions lie at residues 36–55 and 224–263; these read GLTG…RRMG and VVMN…RQNK.

The protein belongs to the universal ribosomal protein uL2 family. As to quaternary structure, part of the 50S ribosomal subunit. Forms a bridge to the 30S subunit in the 70S ribosome.

Its function is as follows. One of the primary rRNA binding proteins. Required for association of the 30S and 50S subunits to form the 70S ribosome, for tRNA binding and peptide bond formation. It has been suggested to have peptidyltransferase activity; this is somewhat controversial. Makes several contacts with the 16S rRNA in the 70S ribosome. In Rhodospirillum centenum (strain ATCC 51521 / SW), this protein is Large ribosomal subunit protein uL2.